Consider the following 282-residue polypeptide: DegV domain-containing protein spr1415 (282 aa).

The DegV domain occupies 3–280 (LAVFTDSSAY…AGSIALGYIP (278 aa)). Residues Thr61 and Ser94 each coordinate hexadecanoate.

In terms of biological role, may bind long-chain fatty acids, such as palmitate, and may play a role in lipid transport or fatty acid metabolism. The chain is DegV domain-containing protein spr1415 from Streptococcus pneumoniae (strain ATCC BAA-255 / R6).